Consider the following 574-residue polypeptide: UvrABC system protein C (574 aa).

A GIY-YIG domain is found at 12 to 92; the sequence is KKPGVYIFKN…IYIHKPKYNI (81 aa). The UVR domain occupies 200–235; sequence EEVKNYLQKAMMDYAKIKNYEKAAQMRDTLFKLENL.

This sequence belongs to the UvrC family. Interacts with UvrB in an incision complex.

It localises to the cytoplasm. In terms of biological role, the UvrABC repair system catalyzes the recognition and processing of DNA lesions. UvrC both incises the 5' and 3' sides of the lesion. The N-terminal half is responsible for the 3' incision and the C-terminal half is responsible for the 5' incision. This Petrotoga mobilis (strain DSM 10674 / SJ95) protein is UvrABC system protein C.